The chain runs to 233 residues: Large ribosomal subunit protein uL1 (233 aa).

It belongs to the universal ribosomal protein uL1 family. As to quaternary structure, part of the 50S ribosomal subunit.

Binds directly to 23S rRNA. The L1 stalk is quite mobile in the ribosome, and is involved in E site tRNA release. In terms of biological role, protein L1 is also a translational repressor protein, it controls the translation of the L11 operon by binding to its mRNA. In Marinomonas sp. (strain MWYL1), this protein is Large ribosomal subunit protein uL1.